Here is a 611-residue protein sequence, read N- to C-terminus: DNA mismatch repair protein MutL (611 aa).

Belongs to the DNA mismatch repair MutL/HexB family.

This protein is involved in the repair of mismatches in DNA. It is required for dam-dependent methyl-directed DNA mismatch repair. May act as a 'molecular matchmaker', a protein that promotes the formation of a stable complex between two or more DNA-binding proteins in an ATP-dependent manner without itself being part of a final effector complex. The polypeptide is DNA mismatch repair protein MutL (Bartonella bacilliformis (strain ATCC 35685 / KC583 / Herrer 020/F12,63)).